Consider the following 305-residue polypeptide: Methionyl-tRNA formyltransferase (305 aa).

A (6S)-5,6,7,8-tetrahydrofolate-binding site is contributed by 109–112 (SLLP).

It belongs to the Fmt family.

It catalyses the reaction L-methionyl-tRNA(fMet) + (6R)-10-formyltetrahydrofolate = N-formyl-L-methionyl-tRNA(fMet) + (6S)-5,6,7,8-tetrahydrofolate + H(+). Functionally, attaches a formyl group to the free amino group of methionyl-tRNA(fMet). The formyl group appears to play a dual role in the initiator identity of N-formylmethionyl-tRNA by promoting its recognition by IF2 and preventing the misappropriation of this tRNA by the elongation apparatus. The polypeptide is Methionyl-tRNA formyltransferase (Paramagnetospirillum magneticum (strain ATCC 700264 / AMB-1) (Magnetospirillum magneticum)).